We begin with the raw amino-acid sequence, 166 residues long: Ribonuclease H2 subunit C (166 aa).

Position 1 is an N-acetylmethionine (Met-1).

Belongs to the RNase H2 subunit C family. As to quaternary structure, the RNase H2 complex is a heterotrimer composed of the catalytic subunit RNASEH2A and the non-catalytic subunits RNASEH2B and RNASEH2C.

The protein resides in the nucleus. In terms of biological role, non catalytic subunit of RNase H2, an endonuclease that specifically degrades the RNA of RNA:DNA hybrids. Participates in DNA replication, possibly by mediating the removal of lagging-strand Okazaki fragment RNA primers during DNA replication. Mediates the excision of single ribonucleotides from DNA:RNA duplexes. This is Ribonuclease H2 subunit C (Rnaseh2c) from Mus musculus (Mouse).